Here is a 208-residue protein sequence, read N- to C-terminus: MKLTQDLTSDGPDPPVLGKPLTRAFFGRSVHDVAPDLIGATLLVDGVGGIIVEVEAYHHTEPAAHSHRGPTPRNMVMFGPPGFAYVYRSYGIHWCVNFVCEMDGSAAAVLIRALQPTHGIPAMRRRRGLHEERLLCSGPGRLCQALGISIAHNALPLDAPPIAVFRRTEKADVVAGVRIGITKAADLPWRYGLKGSKFLSKPFRSAGY.

The protein belongs to the DNA glycosylase MPG family.

This chain is Putative 3-methyladenine DNA glycosylase, found in Nitrobacter winogradskyi (strain ATCC 25391 / DSM 10237 / CIP 104748 / NCIMB 11846 / Nb-255).